The following is a 28-amino-acid chain: Alpha-(1-6)-linked fucose-specific lectin (28 aa).

In terms of assembly, homohexamer. In terms of tissue distribution, expressed by mycelium-forming spores.

The protein resides in the secreted. Its function is as follows. Alpha-(1-6)-linked L-fucose specific lectin. The polypeptide is Alpha-(1-6)-linked fucose-specific lectin (Rhizopus stolonifer (Rhizopus nigricans)).